The primary structure comprises 377 residues: Anhydro-N-acetylmuramic acid kinase (377 aa).

12–19 (GTSLDGID) contributes to the ATP binding site.

The protein belongs to the anhydro-N-acetylmuramic acid kinase family.

It carries out the reaction 1,6-anhydro-N-acetyl-beta-muramate + ATP + H2O = N-acetyl-D-muramate 6-phosphate + ADP + H(+). It functions in the pathway amino-sugar metabolism; 1,6-anhydro-N-acetylmuramate degradation. Its pathway is cell wall biogenesis; peptidoglycan recycling. Its function is as follows. Catalyzes the specific phosphorylation of 1,6-anhydro-N-acetylmuramic acid (anhMurNAc) with the simultaneous cleavage of the 1,6-anhydro ring, generating MurNAc-6-P. Is required for the utilization of anhMurNAc either imported from the medium or derived from its own cell wall murein, and thus plays a role in cell wall recycling. This chain is Anhydro-N-acetylmuramic acid kinase, found in Methylorubrum extorquens (strain CM4 / NCIMB 13688) (Methylobacterium extorquens).